A 156-amino-acid chain; its full sequence is Small ribosomal subunit protein uS7 (156 aa).

The protein belongs to the universal ribosomal protein uS7 family. As to quaternary structure, part of the 30S ribosomal subunit. Contacts proteins S9 and S11.

In terms of biological role, one of the primary rRNA binding proteins, it binds directly to 16S rRNA where it nucleates assembly of the head domain of the 30S subunit. Is located at the subunit interface close to the decoding center, probably blocks exit of the E-site tRNA. The chain is Small ribosomal subunit protein uS7 from Shewanella amazonensis (strain ATCC BAA-1098 / SB2B).